Here is a 208-residue protein sequence, read N- to C-terminus: Methionine-R-sulfoxide reductase B1 (208 aa).

The segment covering 27–36 has biased composition (basic and acidic residues); that stretch reads QDSDNPDKRY. Positions 27–48 are disordered; the sequence is QDSDNPDKRYSGPAATMDNKSE. Positions 54–188 constitute a MsrB domain; sequence KEELRKRLTP…NSASIEFVNA (135 aa). Zn(2+) contacts are provided by Cys93, Cys96, Cys154, and Cys157. Cys111 and Cys177 form a disulfide bridge. The active-site Nucleophile is the Cys177. Residues 189-208 are disordered; that stretch reads DPATSSPPVATPTAAPIAQQ.

This sequence belongs to the MsrB Met sulfoxide reductase family. Requires Zn(2+) as cofactor. In terms of tissue distribution, present in the embryonic nervous system (brain and cord) in neuronal cell bodies, along axons. Also present in embryonic muscles in motor axons. Localizes to growing bristle tips where it is distributed in small puntae. Present at and at sites of actin localization.

The protein localises to the cytoplasm. It localises to the nucleus. Its subcellular location is the cytoskeleton. The enzyme catalyses L-methionyl-[protein] + [thioredoxin]-disulfide + H2O = L-methionyl-(R)-S-oxide-[protein] + [thioredoxin]-dithiol. Methionine-sulfoxide reductase that specifically reduces methionine (R)-sulfoxide back to methionine. While in many cases methionine oxidation is the result of random oxidation following oxidative stress, methionine oxidation is also a post-translational modification that takes place on specific residues. Acts as a regulator of actin assembly by reducing methionine (R)-sulfoxide mediated by Mical on actin thereby promoting filament repolymerization. This chain is Methionine-R-sulfoxide reductase B1 (SelR), found in Drosophila melanogaster (Fruit fly).